The following is a 247-amino-acid chain: tRNA pseudouridine synthase A (247 aa).

Catalysis depends on Asp52, which acts as the Nucleophile. Position 110 (Tyr110) interacts with substrate.

This sequence belongs to the tRNA pseudouridine synthase TruA family. Homodimer.

The catalysed reaction is uridine(38/39/40) in tRNA = pseudouridine(38/39/40) in tRNA. In terms of biological role, formation of pseudouridine at positions 38, 39 and 40 in the anticodon stem and loop of transfer RNAs. The sequence is that of tRNA pseudouridine synthase A from Hyphomonas neptunium (strain ATCC 15444).